The sequence spans 500 residues: MTEQVQDENKLIAERRAKLESIRPNCSANAHPNTFRRTHKAAELQEKYGQNTKEELEALGFKTSIAGRIMAKRGPFLVIQDVSGRIQAYAEKGVQADLKDRYQGLDIGDIIGVTGQLHLSGKGDLYVNMEEYQLLTKALRPLPEKFHGLTDQETRYRQRYVDLIVNEESRQAFVMRSKVVAAIRNFMIKKEFMEVETPMMHVIPGGASARPFITHHNALDMPMYLRIAPELYLKRLVVGGFERVFEINRNFRNEGLSPRHNPEFTMMEFYMAYADYKDLMDLTEELLSSIAIELLGSAQMPYGEHTVDFGGPYARLSMLEAIQKYNPDNATIQAMTYEQVKDLEFMRELAISLGIKIEKFWTCGQLLEEIFGETAEWQLMQPTFITGYPADISPLARRNDDNHFITDRFEFFIGGREVANGFSELNDAEDQDSRFKAQVDAKDAGDDEAMFYDADYITALEHGLPPTAGQGIGIDRLVMLFTNTHTIRDVILFPAMRPQA.

Mg(2+)-binding residues include E410 and E417.

The protein belongs to the class-II aminoacyl-tRNA synthetase family. Homodimer. The cofactor is Mg(2+).

The protein resides in the cytoplasm. The catalysed reaction is tRNA(Lys) + L-lysine + ATP = L-lysyl-tRNA(Lys) + AMP + diphosphate. The chain is Lysine--tRNA ligase from Shewanella sp. (strain ANA-3).